Reading from the N-terminus, the 184-residue chain is Elongation factor P (184 aa).

Belongs to the elongation factor P family.

The protein localises to the cytoplasm. It participates in protein biosynthesis; polypeptide chain elongation. Functionally, involved in peptide bond synthesis. Stimulates efficient translation and peptide-bond synthesis on native or reconstituted 70S ribosomes in vitro. Probably functions indirectly by altering the affinity of the ribosome for aminoacyl-tRNA, thus increasing their reactivity as acceptors for peptidyl transferase. The sequence is that of Elongation factor P from Acidovorax ebreus (strain TPSY) (Diaphorobacter sp. (strain TPSY)).